We begin with the raw amino-acid sequence, 335 residues long: Glutamyl-tRNA reductase (335 aa).

Residues 60 to 63 (TCHR), serine 110, 115 to 117 (ETE), and glutamine 121 each bind substrate. Cysteine 61 serves as the catalytic Nucleophile. 189 to 194 (GYSEIN) contacts NADP(+).

Belongs to the glutamyl-tRNA reductase family. In terms of assembly, homodimer.

It carries out the reaction (S)-4-amino-5-oxopentanoate + tRNA(Glu) + NADP(+) = L-glutamyl-tRNA(Glu) + NADPH + H(+). It participates in porphyrin-containing compound metabolism; protoporphyrin-IX biosynthesis; 5-aminolevulinate from L-glutamyl-tRNA(Glu): step 1/2. Catalyzes the NADPH-dependent reduction of glutamyl-tRNA(Glu) to glutamate 1-semialdehyde (GSA). The polypeptide is Glutamyl-tRNA reductase (Chlamydia trachomatis serovar L2 (strain ATCC VR-902B / DSM 19102 / 434/Bu)).